The chain runs to 683 residues: Methionine--tRNA ligase (683 aa).

Positions 15–25 (PYANGSIHLGH) match the 'HIGH' region motif. Zn(2+) contacts are provided by Cys-146, Cys-149, Cys-159, and Cys-162. Residues 332 to 336 (KMSKS) carry the 'KMSKS' region motif. Lys-335 is a binding site for ATP. The tRNA-binding domain occupies 582–683 (DFAKVDLRIA…QGAQAGMRVM (102 aa)).

Belongs to the class-I aminoacyl-tRNA synthetase family. MetG type 1 subfamily. Homodimer. Requires Zn(2+) as cofactor.

It is found in the cytoplasm. It carries out the reaction tRNA(Met) + L-methionine + ATP = L-methionyl-tRNA(Met) + AMP + diphosphate. Is required not only for elongation of protein synthesis but also for the initiation of all mRNA translation through initiator tRNA(fMet) aminoacylation. The polypeptide is Methionine--tRNA ligase (Vibrio cholerae serotype O1 (strain ATCC 39315 / El Tor Inaba N16961)).